The sequence spans 357 residues: Protein FAM118A (357 aa).

M1 is subject to N-acetylmethionine. A helical membrane pass occupies residues 30–46; sequence LLLVIGTGVSAAVAPGI. S311 bears the Phosphoserine mark.

It belongs to the FAM118 family.

The protein resides in the membrane. The chain is Protein FAM118A (Fam118a) from Mus musculus (Mouse).